The primary structure comprises 177 residues: Endothelin-2 (177 aa).

The N-terminal stretch at 1 to 23 (MPTALCSIALALLVALHEGKSQA) is a signal peptide. Positions 24-45 (ATTPIPEQPAPLPRARGSHLRT) are excised as a propeptide. Cystine bridges form between cysteine 48–cysteine 62 and cysteine 50–cysteine 58. Residues 69-177 (VNTPGQTAPY…RPTHSRQRKR (109 aa)) constitute a propeptide that is removed on maturation. Residues 95–110 (CECYSARDPACATFCH) are endothelin-like. The tract at residues 155 to 177 (HFARQQQKPTRETRPTHSRQRKR) is disordered.

The protein belongs to the endothelin/sarafotoxin family. As to expression, expressed in various organs including heart, lung, liver, kidney, gastrointestinal tract, uterus and ovary, but not in spleen. Within the gastrointestinal tract, gene expression was detected in rumen, a ruminant-specific digestive organ, as well as stomach, duodenum and colon.

It is found in the secreted. In terms of biological role, endothelins are endothelium-derived vasoconstrictor peptides. This is Endothelin-2 (EDN2) from Bos taurus (Bovine).